Here is a 489-residue protein sequence, read N- to C-terminus: Putative general negative regulator of transcription C16C9.04c (489 aa).

An RING-type zinc finger spans residues 18-61 (CPLCMEEIDISDKNFKPCQCGYRVCRFCWHHIKEDLNGRCPACR). Positions 76-109 (AEEWKMDLHRKNERKKREKERKEVELSNRKHLAN) form a coiled coil. The RRM domain occupies 116–198 (NLAYVNGLSP…VSDGRHLRAS (83 aa)). The C3H1-type zinc-finger motif lies at 199–226 (YGTTKYCTSYLRNQQCPNPSCMYLHEPG). Composition is skewed to polar residues over residues 246–261 (LSTKPNVVNGATHSPS) and 466–479 (ENQPPTSLGINNGN). Disordered stretches follow at residues 246-268 (LSTKPNVVNGATHSPSPSLPFKT) and 458-489 (VPEQEKSAENQPPTSLGINNGNPVMPPPGFQS).

Its subcellular location is the nucleus. Functionally, may negatively regulate the basal and activated transcription of many genes. The sequence is that of Putative general negative regulator of transcription C16C9.04c from Schizosaccharomyces pombe (strain 972 / ATCC 24843) (Fission yeast).